A 2054-amino-acid chain; its full sequence is Multiple PDZ domain protein (2054 aa).

One can recognise an L27 domain in the interval 3–63 (ETIDKNRALQ…SLQQLKDQVN (61 aa)). The PDZ 1 domain maps to 138–225 (IFELLKPPCG…TIQLVIARGS (88 aa)). Phosphoserine is present on S231. PDZ domains are found at residues 258-338 (TIEL…ARGA), 377-463 (DVEL…MRKG), 545-626 (VAHV…CRRT), and 692-778 (AIEL…VAKP). Phosphoserine occurs at positions 782 and 1065. The 82-residue stretch at 995–1076 (TVTIAKGSSS…IGPDIKITYV (82 aa)) folds into the PDZ 6 domain. A disordered region spans residues 1110 to 1129 (PELPEREEGEGEESELQNAA). Residues 1138 to 1230 (RVELWREPSK…PVVFMVQSIV (93 aa)) enclose the PDZ 7 domain. R1157 bears the Omega-N-methylarginine mark. Positions 1261–1273 (LQLTSDKAPSQSE) are enriched in polar residues. Residues 1261 to 1312 (LQLTSDKAPSQSESESEKATLCSVPSSSPSVFSEMSSDYAQPSATTVAEDED) form a disordered region. Positions 1283–1297 (SVPSSSPSVFSEMSS) are enriched in low complexity. The region spanning 1337-1420 (MIELEKGHSG…KVKIIFIRNA (84 aa)) is the PDZ 8 domain. Residues 1433-1454 (AADPLPSTSESPQNKEVEPSIT) are disordered. Residues 1470 to 1551 (HLELPKDQGG…TVKLTVGAEN (82 aa)) enclose the PDZ 9 domain. The disordered stretch occupies residues 1560–1594 (AAVTASGERKDSSQTPAVPAPDLEPIPSTSRSSTP). 2 PDZ domains span residues 1613–1696 (TIEI…YRDE) and 1709–1791 (TVEL…GRIK). Residues 1795 to 1834 (FHSERRPSQSSQVSESSLSSFSLPRSGIHTSESSESSAKK) form a disordered region. A phosphoserine mark is found at S1802 and S1808. Low complexity predominate over residues 1802–1834 (SQSSQVSESSLSSFSLPRSGIHTSESSESSAKK). PDZ domains are found at residues 1846-1932 (TVEI…VAGG) and 1971-2054 (TITL…MVLS).

In terms of assembly, interacts with F11R/JAM, CLDN1, NG2, CXADR, CRB1, MPP4 and PALS1, HTR2A, HTR2B, PLEKHA1/TAPP1 and PLEKHA2/TAPP2. Interacts with CXADR. Interacts with HTR2C, CLDN5, DLG4, GRIN1, SYNGAP1, CAMK2A and CAMK2B. Interacts with FAT4 (via cytoplasmic domain). Interacts with DLL1. Abundant in all cerebral cortical layers, especially the piriform cortex, the pyramidal cells of the CA1-CA3 subfields of the hippocampus, as well as the granular layer of the dentate gyrus. Detected in the internal granular layer and the mitral cell layer of the olfactory bulb; in the medial habenular nucleus; and in amygdaloid, thalamic, hypothalamic, and pontine nuclei. In the cerebellum, found at high levels in the granular layer. Detected in the lateral ventricle. Expression overlaps with 5-HT2C receptor expression in all regions of the brain including the choroid plexus, where 5-HT2C receptors are highly enriched.

Its subcellular location is the endomembrane system. The protein localises to the cell junction. It is found in the tight junction. It localises to the synapse. The protein resides in the apical cell membrane. Its subcellular location is the postsynaptic density. The protein localises to the cell projection. It is found in the dendrite. It localises to the synaptosome. In terms of biological role, member of the NMDAR signaling complex that may play a role in control of AMPAR potentiation and synaptic plasticity in excitatory synapses. Promotes clustering of HT2RC at the cell surface. The sequence is that of Multiple PDZ domain protein (Mpdz) from Rattus norvegicus (Rat).